The sequence spans 1409 residues: DNA-directed RNA polymerase subunit beta' (1409 aa).

The Zn(2+) site is built by C70, C72, C85, and C88. D458, D460, and D462 together coordinate Mg(2+). Residues C813, C887, C894, and C897 each coordinate Zn(2+).

It belongs to the RNA polymerase beta' chain family. In terms of assembly, the RNAP catalytic core consists of 2 alpha, 1 beta, 1 beta' and 1 omega subunit. When a sigma factor is associated with the core the holoenzyme is formed, which can initiate transcription. It depends on Mg(2+) as a cofactor. Zn(2+) serves as cofactor.

The enzyme catalyses RNA(n) + a ribonucleoside 5'-triphosphate = RNA(n+1) + diphosphate. Its function is as follows. DNA-dependent RNA polymerase catalyzes the transcription of DNA into RNA using the four ribonucleoside triphosphates as substrates. The protein is DNA-directed RNA polymerase subunit beta' of Acidovorax ebreus (strain TPSY) (Diaphorobacter sp. (strain TPSY)).